A 383-amino-acid polypeptide reads, in one-letter code: Transposase InsI for insertion sequence element IS30C (383 aa).

The region spanning 213-379 (VNGTPIHERS…TPKEIIERGV (167 aa)) is the Integrase catalytic domain.

This sequence belongs to the transposase IS30 family.

Functionally, required for the transposition of the insertion element. This is Transposase InsI for insertion sequence element IS30C (insI3) from Escherichia coli (strain K12).